The primary structure comprises 337 residues: Interferon gamma receptor 2 (337 aa).

The N-terminal stretch at M1–A21 is a signal peptide. At S28 to Q247 the chain is on the extracellular side. Positions P31–M129 constitute a Fibronectin type-III 1 domain. Residues N56 and N85 are each glycosylated (N-linked (GlcNAc...) asparagine). A disulfide bridge connects residues C86 and C94. N-linked (GlcNAc...) asparagine glycans are attached at residues N110, N137, N219, and N231. The region spanning P142–D240 is the Fibronectin type-III 2 domain. Cysteines 209 and 234 form a disulfide. Residues V248 to F268 form a helical membrane-spanning segment. The Cytoplasmic segment spans residues L269–L337. The Dileucine internalization motif signature appears at L276–I277.

Belongs to the type II cytokine receptor family. In terms of assembly, heterodimer with IFNGR1, to form the IFNG receptor complex. Interacts (via intracellular domain) with JAK2. As to expression, expressed in T-cells (at protein level).

It localises to the cell membrane. The protein resides in the cytoplasmic vesicle membrane. Its subcellular location is the golgi apparatus membrane. The protein localises to the endoplasmic reticulum membrane. It is found in the cytoplasm. Functionally, associates with IFNGR1 to form a receptor for the cytokine interferon gamma (IFNG). Ligand binding stimulates activation of the JAK/STAT signaling pathway. Required for signal transduction in contrast to other receptor subunit responsible for ligand binding. The protein is Interferon gamma receptor 2 of Homo sapiens (Human).